Reading from the N-terminus, the 265-residue chain is 3'(2'),5'-bisphosphate nucleotidase CysQ (265 aa).

5 residues coordinate Mg(2+): E80, D99, L101, D102, and D222. E80 contacts substrate. Substrate-binding positions include 101 to 104 (LDGT) and D222.

This sequence belongs to the inositol monophosphatase superfamily. CysQ family. Mg(2+) is required as a cofactor.

Its subcellular location is the cell inner membrane. It carries out the reaction adenosine 3',5'-bisphosphate + H2O = AMP + phosphate. In terms of biological role, converts adenosine-3',5'-bisphosphate (PAP) to AMP. In Buchnera aphidicola subsp. Acyrthosiphon pisum (strain APS) (Acyrthosiphon pisum symbiotic bacterium), this protein is 3'(2'),5'-bisphosphate nucleotidase CysQ.